The sequence spans 125 residues: UPF0763 protein NAMH_0545 (125 aa).

The protein belongs to the UPF0763 family.

In Nautilia profundicola (strain ATCC BAA-1463 / DSM 18972 / AmH), this protein is UPF0763 protein NAMH_0545.